The following is a 49-amino-acid chain: Photosystem II reaction center protein K (49 aa).

A propeptide spanning residues 1 to 12 is cleaved from the precursor; that stretch reads MISSIHLRKLLG. Residues 24–44 form a helical membrane-spanning segment; it reads IIDVLPIIPVLFLLLAFVWQA.

This sequence belongs to the PsbK family. PSII is composed of 1 copy each of membrane proteins PsbA, PsbB, PsbC, PsbD, PsbE, PsbF, PsbH, PsbI, PsbJ, PsbK, PsbL, PsbM, PsbT, PsbX, PsbY, PsbZ, Psb30/Ycf12, at least 3 peripheral proteins of the oxygen-evolving complex and a large number of cofactors. It forms dimeric complexes.

It localises to the plastid. The protein localises to the chloroplast thylakoid membrane. One of the components of the core complex of photosystem II (PSII). PSII is a light-driven water:plastoquinone oxidoreductase that uses light energy to abstract electrons from H(2)O, generating O(2) and a proton gradient subsequently used for ATP formation. It consists of a core antenna complex that captures photons, and an electron transfer chain that converts photonic excitation into a charge separation. This chain is Photosystem II reaction center protein K, found in Phacus acuminatus.